Here is a 656-residue protein sequence, read N- to C-terminus: DNA ligase (656 aa).

NAD(+) contacts are provided by residues 32–36 and 81–82; these read DAVYD and SL. The active-site N6-AMP-lysine intermediate is the K112. R133, E167, and K306 together coordinate NAD(+). C400, C403, C416, and C421 together coordinate Zn(2+). Residues 577–656 form the BRCT domain; that stretch reads KSSSVFNNKT…ELLKRLKELD (80 aa).

This sequence belongs to the NAD-dependent DNA ligase family. LigA subfamily. The cofactor is Mg(2+). Requires Mn(2+) as cofactor.

The catalysed reaction is NAD(+) + (deoxyribonucleotide)n-3'-hydroxyl + 5'-phospho-(deoxyribonucleotide)m = (deoxyribonucleotide)n+m + AMP + beta-nicotinamide D-nucleotide.. In terms of biological role, DNA ligase that catalyzes the formation of phosphodiester linkages between 5'-phosphoryl and 3'-hydroxyl groups in double-stranded DNA using NAD as a coenzyme and as the energy source for the reaction. It is essential for DNA replication and repair of damaged DNA. The chain is DNA ligase from Helicobacter pylori (strain HPAG1).